Here is a 289-residue protein sequence, read N- to C-terminus: Iodotyrosine deiodinase 1 (289 aa).

The chain crosses the membrane as a helical span at residues 1–21 (MYFLTPILVAILCILVVWIFK). Residues 29–58 (KKKGEPRTRAEARPWVDEDLKDSSDLHQAE) are compositionally biased toward basic and acidic residues. The segment at 29–69 (KKKGEPRTRAEARPWVDEDLKDSSDLHQAEEDADEWQESEE) is disordered. The span at 59–69 (EDADEWQESEE) shows a compositional bias: acidic residues. FMN is bound by residues 100-104 (RRSVR), Ser-128, and 128-129 (SG). 3-iodo-L-tyrosine contacts are provided by Ala-130, Glu-157, Tyr-161, and Lys-182. Residues 237 to 239 (TTT) and Arg-279 contribute to the FMN site.

This sequence belongs to the nitroreductase family. Homodimer. Requires FMN as cofactor. Expressed at a high level in thyroid gland (at protein level). Expressed at a high level in thyroid gland and at lower level in kidney and trachea.

It localises to the cell membrane. Its subcellular location is the cytoplasmic vesicle membrane. It carries out the reaction 2 iodide + L-tyrosine + 2 NADP(+) = 3,5-diiodo-L-tyrosine + 2 NADPH + H(+). It catalyses the reaction iodide + L-tyrosine + NADP(+) = 3-iodo-L-tyrosine + NADPH. The catalysed reaction is 3-iodo-L-tyrosine + iodide + NADP(+) = 3,5-diiodo-L-tyrosine + NADPH + H(+). The enzyme catalyses L-tyrosine + chloride + NADP(+) = 3-chloro-L-tyrosine + NADPH. It carries out the reaction bromide + L-tyrosine + NADP(+) = 3-bromo-L-tyrosine + NADPH. Its function is as follows. Catalyzes the dehalogenation of halotyrosines such as 3-bromo-L-tyrosine, 3-chloro-L-tyrosine, 3-iodo-L-tyrosine and 3,5-diiodo-L-tyrosine. During thyroid hormone biosynthesis, facilitates iodide salvage by catalysing the oxidative NADPH-dependent deiodination of the halogenated by-products of thyroid hormone production, monoiodotyrosine (L-MIT) and diiodotyrosine (L-DIT). The scavanged iodide can then reenter the hormone-producing pathways. Acts more efficiently on 3-iodo-L-tyrosine than 3,5-diiodo-L-tyrosine. The sequence is that of Iodotyrosine deiodinase 1 from Homo sapiens (Human).